The following is a 462-amino-acid chain: Iroquois-class homeodomain protein irx-1-B (462 aa).

The segment at residues 121 to 183 (DPGRPKNATR…NARRRLKKEN (63 aa)) is a DNA-binding region (homeobox; TALE-type). 3 disordered regions span residues 191–302 (GKED…PHSK), 314–339 (SPDGALKSSPPPSQANHTSPQMQHPA), and 405–462 (SLSS…LPSA). Composition is skewed to acidic residues over residues 210 to 220 (EDDEEIDLESI) and 228 to 239 (NDGEQSNEEEDE). Over residues 240-257 (KLDHFRHGEKVSLKKESE) the composition is skewed to basic and acidic residues. Residues 410–426 (RTPERTSPKHSDRENLP) show a composition bias toward basic and acidic residues. Residues 446–455 (FSQQEGTSRI) are compositionally biased toward polar residues.

Belongs to the TALE/IRO homeobox family.

The protein localises to the nucleus. Its function is as follows. Acts partially redundantly with other irx members in neural patterning. Required for formation of the posterior forebrain, midbrain, hindbrain, and to a lesser extent, spinal cord. Acts early in neural plate development to induce expression of some but not all proneural genes, and specify a neural precursor state. Also up-regulates repressors that prevent neuronal differentiation. Patterns the neuroectoderm in both the anterior/posterior and dorsal/ventral axes. Acts primarily as a transcriptional repressor during neural development, and binds to the bmp4 promoter to repress gene expression and thus mediate down-regulation of bmp4 by wnt signaling. Controls multiple processes through bmp4-repression including neural plate development, neural crest specification and Spemann organizer development. Involved in the specification of the preplacodal field at the anterior border of the neural plate. Regulates the genetic cascade of interactions that are necessary for positioning the isthmus organizer and the formation of the midbrain-hindbrain boundary. Required during at least two stages of pronephros kidney development; during neurula stages, maintains transcription of key renal genes to define the size and identity of the pronephric anlage, probably in part through regulation of bmp-signaling. Subsequently required for proper formation of the intermediate tubule segment of the pronephros. Acts principally as a transcriptional activator during pronephros development. The sequence is that of Iroquois-class homeodomain protein irx-1-B (irx1-b) from Xenopus laevis (African clawed frog).